The chain runs to 247 residues: Adenosylcobinamide-GDP ribazoletransferase (247 aa).

5 helical membrane passes run 34–54 (IITF…VFMV), 59–79 (CGVP…TGGF), 113–133 (GGLA…ELAL), 138–158 (ILAL…LLMY), and 194–214 (VLLP…AIFI).

Belongs to the CobS family. Requires Mg(2+) as cofactor.

The protein resides in the cell inner membrane. It carries out the reaction alpha-ribazole + adenosylcob(III)inamide-GDP = adenosylcob(III)alamin + GMP + H(+). The catalysed reaction is alpha-ribazole 5'-phosphate + adenosylcob(III)inamide-GDP = adenosylcob(III)alamin 5'-phosphate + GMP + H(+). Its pathway is cofactor biosynthesis; adenosylcobalamin biosynthesis; adenosylcobalamin from cob(II)yrinate a,c-diamide: step 7/7. Joins adenosylcobinamide-GDP and alpha-ribazole to generate adenosylcobalamin (Ado-cobalamin). Also synthesizes adenosylcobalamin 5'-phosphate from adenosylcobinamide-GDP and alpha-ribazole 5'-phosphate. This Shigella boydii serotype 4 (strain Sb227) protein is Adenosylcobinamide-GDP ribazoletransferase.